We begin with the raw amino-acid sequence, 92 residues long: Small ribosomal subunit protein uS19c (92 aa).

Belongs to the universal ribosomal protein uS19 family.

It is found in the plastid. It localises to the chloroplast. Protein S19 forms a complex with S13 that binds strongly to the 16S ribosomal RNA. This chain is Small ribosomal subunit protein uS19c, found in Morus indica (Mulberry).